The sequence spans 263 residues: 3-methyl-2-oxobutanoate hydroxymethyltransferase (263 aa).

2 residues coordinate Mg(2+): Asp46 and Asp85. Residues 46-47 (DS), Asp85, and Lys115 contribute to the 3-methyl-2-oxobutanoate site. Mg(2+) is bound at residue Glu117. The Proton acceptor role is filled by Glu180.

The protein belongs to the PanB family. Homodecamer; pentamer of dimers. Requires Mg(2+) as cofactor.

The protein localises to the cytoplasm. It catalyses the reaction 3-methyl-2-oxobutanoate + (6R)-5,10-methylene-5,6,7,8-tetrahydrofolate + H2O = 2-dehydropantoate + (6S)-5,6,7,8-tetrahydrofolate. It functions in the pathway cofactor biosynthesis; (R)-pantothenate biosynthesis; (R)-pantoate from 3-methyl-2-oxobutanoate: step 1/2. Its function is as follows. Catalyzes the reversible reaction in which hydroxymethyl group from 5,10-methylenetetrahydrofolate is transferred onto alpha-ketoisovalerate to form ketopantoate. The chain is 3-methyl-2-oxobutanoate hydroxymethyltransferase from Desulforapulum autotrophicum (strain ATCC 43914 / DSM 3382 / VKM B-1955 / HRM2) (Desulfobacterium autotrophicum).